The sequence spans 87 residues: uncharacterized protein (87 aa).

This is an uncharacterized protein from Autographa californica nuclear polyhedrosis virus (AcMNPV).